Here is a 152-residue protein sequence, read N- to C-terminus: Deoxyuridine 5'-triphosphate nucleotidohydrolase (152 aa).

Residues 71–73 (RSG), Asn84, and 88–90 (TID) each bind substrate.

This sequence belongs to the dUTPase family. Mg(2+) is required as a cofactor.

The enzyme catalyses dUTP + H2O = dUMP + diphosphate + H(+). It functions in the pathway pyrimidine metabolism; dUMP biosynthesis; dUMP from dCTP (dUTP route): step 2/2. Functionally, this enzyme is involved in nucleotide metabolism: it produces dUMP, the immediate precursor of thymidine nucleotides and it decreases the intracellular concentration of dUTP so that uracil cannot be incorporated into DNA. The protein is Deoxyuridine 5'-triphosphate nucleotidohydrolase of Roseobacter denitrificans (strain ATCC 33942 / OCh 114) (Erythrobacter sp. (strain OCh 114)).